The sequence spans 285 residues: tRNA (cytidine(32)/guanosine(34)-2'-O)-methyltransferase (285 aa).

Residues G53, W55, D83, D99, and D124 each coordinate S-adenosyl-L-methionine. Residue K164 is the Proton acceptor of the active site.

It belongs to the class I-like SAM-binding methyltransferase superfamily. RNA methyltransferase RlmE family. TRM7 subfamily.

It is found in the cytoplasm. It carries out the reaction cytidine(32)/guanosine(34) in tRNA + 2 S-adenosyl-L-methionine = 2'-O-methylcytidine(32)/2'-O-methylguanosine(34) in tRNA + 2 S-adenosyl-L-homocysteine + 2 H(+). Functionally, methylates the 2'-O-ribose of nucleotides at positions 32 and 34 of the tRNA anticodon loop of substrate tRNAs. Requires trm732 for methylation of the cytidine at position 32 of the anticodon loop of substrate tRNAs. Requires trm734 for methylation of the nucleotide at position 34 of the anticodon loop of substrate tRNAs. Methylates tRNA(Phe). This is tRNA (cytidine(32)/guanosine(34)-2'-O)-methyltransferase from Schizosaccharomyces pombe (strain 972 / ATCC 24843) (Fission yeast).